Reading from the N-terminus, the 750-residue chain is Photosystem I P700 chlorophyll a apoprotein A1 (750 aa).

8 consecutive transmembrane segments (helical) span residues 70 to 93, 156 to 179, 195 to 219, 291 to 309, 346 to 369, 385 to 411, 433 to 455, and 531 to 549; these read VFSAHFGQLSIIFLWLSGMYFHGA, LYCTAIGALVFAALMLFAGWFHYH, LNHHLAGLLGLGSLSWAGHQVHVSL, IAHHHLAIAILFLIAGHMY, WHAQLSLNLAMLGSLTIIVAHHMY, LSLFTHHMWIGGFLIVGAAAHAAIFMV, AIISHLNWVCIFLGFHSFGLYIH, and FLVHHIHAFTIHVTVLILL. The [4Fe-4S] cluster site is built by cysteine 573 and cysteine 582. The next 2 helical transmembrane spans lie at 589–610 and 664–686; these read HVFLGLFWMYNAISVVIFHFSW and LSAYGLFFLGAHFVWAFSLMFLF. Histidine 675 contributes to the chlorophyll a' binding site. 2 residues coordinate chlorophyll a: methionine 683 and tyrosine 691. Phylloquinone is bound at residue tryptophan 692. The helical transmembrane segment at 724–744 threads the bilayer; it reads AVGVTHYLLGGIATTWAFFLA.

This sequence belongs to the PsaA/PsaB family. In terms of assembly, the PsaA/B heterodimer binds the P700 chlorophyll special pair and subsequent electron acceptors. PSI consists of a core antenna complex that captures photons, and an electron transfer chain that converts photonic excitation into a charge separation. The eukaryotic PSI reaction center is composed of at least 11 subunits. The cofactor is P700 is a chlorophyll a/chlorophyll a' dimer, A0 is one or more chlorophyll a, A1 is one or both phylloquinones and FX is a shared 4Fe-4S iron-sulfur center..

Its subcellular location is the plastid. It localises to the chloroplast thylakoid membrane. It catalyses the reaction reduced [plastocyanin] + hnu + oxidized [2Fe-2S]-[ferredoxin] = oxidized [plastocyanin] + reduced [2Fe-2S]-[ferredoxin]. Its function is as follows. PsaA and PsaB bind P700, the primary electron donor of photosystem I (PSI), as well as the electron acceptors A0, A1 and FX. PSI is a plastocyanin-ferredoxin oxidoreductase, converting photonic excitation into a charge separation, which transfers an electron from the donor P700 chlorophyll pair to the spectroscopically characterized acceptors A0, A1, FX, FA and FB in turn. Oxidized P700 is reduced on the lumenal side of the thylakoid membrane by plastocyanin. The protein is Photosystem I P700 chlorophyll a apoprotein A1 of Olimarabidopsis pumila (Dwarf rocket).